The following is a 243-amino-acid chain: Urease accessory protein UreF (243 aa).

It belongs to the UreF family. In terms of assembly, ureD, UreF and UreG form a complex that acts as a GTP-hydrolysis-dependent molecular chaperone, activating the urease apoprotein by helping to assemble the nickel containing metallocenter of UreC. The UreE protein probably delivers the nickel.

It localises to the cytoplasm. In terms of biological role, required for maturation of urease via the functional incorporation of the urease nickel metallocenter. The chain is Urease accessory protein UreF from Rhodopseudomonas palustris (strain BisB5).